A 461-amino-acid polypeptide reads, in one-letter code: MSLDIQSLDIQCEELSDARWAELLPLLQQCQVVRLDDCGLTEARCKDISSALRVNPALAELNLRSNELGDVGVHCVLQGLQTPSCKIQKLSLQNCCLTGAGCGVLSSTLRTLPTLQELHLSDNLLGDAGLQLLCEGLLDPQCRLEKLQLEYCSLSAASCEPLASVLRAKPDFKELTVSNNDINEAGVRVLCQGLKDSPCQLEALKLESCGVTSDNCRDLCGIVASKASLRELALGSNKLGDVGMAELCPGLLHPSSRLRTLWIWECGITAKGCGDLCRVLRAKESLKELSLAGNELGDEGARLLCETLLEPGCQLESLWVKSCSFTAACCSHFSSVLAQNRFLLELQISNNRLEDAGVRELCQGLGQPGSVLRVLWLADCDVSDSSCSSLAATLLANHSLRELDLSNNCLGDAGILQLVESVRQPGCLLEQLVLYDIYWSEEMEDRLQALEKDKPSLRVIS.

At serine 2 the chain carries N-acetylserine. The tract at residues 2-11 (SLDIQSLDIQ) is 2 X 5 AA tandem repeats of S-L-D-I-Q. LRR repeat units follow at residues 20–48 (WAEL…CKDI), 49–76 (SSAL…VHCV), 77–105 (LQGL…CGVL), 106–133 (SSTL…LQLL), 134–162 (CEGL…CEPL), 163–190 (ASVL…VRVL), 191–219 (CQGL…CRDL), 220–247 (CGIV…MAEL), 248–276 (CPGL…CGDL), 277–304 (CRVL…ARLL), 305–333 (CETL…CSHF), 334–361 (SSVL…VREL), 362–390 (CQGL…CSSL), 391–418 (AATL…ILQL), and 419–447 (VESV…EDRL). Phosphothreonine is present on threonine 82. The residue at position 91 (serine 91) is a Phosphoserine.

Forms high-affinity heterodimers with RNASE1, ANG and RNASE2. Post-translationally, the N-terminus is blocked. At least 30 of the 32 cysteine residues are in the reduced form.

The protein resides in the cytoplasm. It localises to the nucleus. In terms of biological role, ribonuclease inhibitor which inhibits RNASE1, RNASE2 and angiogenin (ANG). May play a role in redox homeostasis. Required to inhibit the cytotoxic tRNA ribonuclease activity of ANG in the cytoplasm in absence of stress. Relocates to the nucleus in response to stress, relieving inhibition of ANG in the cytoplasm, and inhibiting the angiogenic activity of ANG in the nucleus. This is Ribonuclease inhibitor from Homo sapiens (Human).